Here is a 192-residue protein sequence, read N- to C-terminus: Cytidylate kinase (192 aa).

An ATP-binding site is contributed by 7–15 (GPPGSGKST).

It belongs to the cytidylate kinase family. Type 2 subfamily.

Its subcellular location is the cytoplasm. The catalysed reaction is CMP + ATP = CDP + ADP. It catalyses the reaction dCMP + ATP = dCDP + ADP. This Halobacterium salinarum (strain ATCC 29341 / DSM 671 / R1) protein is Cytidylate kinase.